The sequence spans 71 residues: ATP synthase subunit c (71 aa).

The next 2 helical transmembrane spans lie at 5–25 (GAAIVAGLAAVGGAIAVAIIV) and 47–67 (FIGVPLAEAVPIIAIVMGFLI).

This sequence belongs to the ATPase C chain family. F-type ATPases have 2 components, F(1) - the catalytic core - and F(0) - the membrane proton channel. F(1) has five subunits: alpha(3), beta(3), gamma(1), delta(1), epsilon(1). F(0) has three main subunits: a(1), b(2) and c(10-14). The alpha and beta chains form an alternating ring which encloses part of the gamma chain. F(1) is attached to F(0) by a central stalk formed by the gamma and epsilon chains, while a peripheral stalk is formed by the delta and b chains.

It is found in the cell membrane. In terms of biological role, f(1)F(0) ATP synthase produces ATP from ADP in the presence of a proton or sodium gradient. F-type ATPases consist of two structural domains, F(1) containing the extramembraneous catalytic core and F(0) containing the membrane proton channel, linked together by a central stalk and a peripheral stalk. During catalysis, ATP synthesis in the catalytic domain of F(1) is coupled via a rotary mechanism of the central stalk subunits to proton translocation. Its function is as follows. Key component of the F(0) channel; it plays a direct role in translocation across the membrane. A homomeric c-ring of between 10-14 subunits forms the central stalk rotor element with the F(1) delta and epsilon subunits. In Alkalihalobacillus alcalophilus (Bacillus alcalophilus), this protein is ATP synthase subunit c.